The primary structure comprises 1353 residues: Ankyrin repeat domain-containing protein 36B (1353 aa).

6 ANK repeats span residues 19-48 (YHLKRIHRAVLRGNLEKLKYLLLTYYDANK), 52-81 (KERTALHLACATGQPEMVHLLVSRRCELNL), 85-114 (EDRTPLIKAVQLRQEACATLLLQNGADPNI), 118-147 (FGRTALHYAVYNEDTSMIEKLLSHGTNIEE), 151-180 (NEYQPLLLAVSRRKVKMVEFLLKKKANVNA), and 184-213 (LGRSALILAVTLGEKDIVILLLQHNIDVFS). 2 disordered regions span residues 249-307 (PINS…KDSV) and 349-607 (MGGG…KATS). Over residues 250 to 259 (INSNPVSPQK) the composition is skewed to polar residues. Composition is skewed to basic and acidic residues over residues 260–272 (QRAEKATSDDKDS) and 295–306 (PAEKATSDEKDS). Polar residues-rich tracts occupy residues 355–367 (GTVSSQKQPASKT) and 389–400 (GTVSSQKQQALK). Composition is skewed to basic and acidic residues over residues 436-455 (TSDEKDSFSNITREKKDGEI) and 471-491 (SVKEDSVLNIAREKKDGEKSR). Residues 579 to 600 (VSNIPTEIKDGQQSGTVSSQKQ) show a composition bias toward polar residues. Coiled-coil stretches lie at residues 731–762 (AEQDLEMASEGEQKRLEEYENNQPQVKNQIHS), 821–908 (IKLK…YRIE), 937–1055 (SETD…DHDQ), and 1119–1344 (VFEH…LQHS).

Belongs to the ANKRD36 family.

In Homo sapiens (Human), this protein is Ankyrin repeat domain-containing protein 36B (ANKRD36B).